The following is a 94-amino-acid chain: uncharacterized protein (94 aa).

This is an uncharacterized protein from Escherichia coli (strain K12).